Consider the following 250-residue polypeptide: 3-deoxy-manno-octulosonate cytidylyltransferase (250 aa).

The protein belongs to the KdsB family.

It localises to the cytoplasm. It catalyses the reaction 3-deoxy-alpha-D-manno-oct-2-ulosonate + CTP = CMP-3-deoxy-beta-D-manno-octulosonate + diphosphate. The protein operates within nucleotide-sugar biosynthesis; CMP-3-deoxy-D-manno-octulosonate biosynthesis; CMP-3-deoxy-D-manno-octulosonate from 3-deoxy-D-manno-octulosonate and CTP: step 1/1. It functions in the pathway bacterial outer membrane biogenesis; lipopolysaccharide biosynthesis. Its function is as follows. Activates KDO (a required 8-carbon sugar) for incorporation into bacterial lipopolysaccharide in Gram-negative bacteria. This Yersinia enterocolitica serotype O:8 / biotype 1B (strain NCTC 13174 / 8081) protein is 3-deoxy-manno-octulosonate cytidylyltransferase.